A 179-amino-acid chain; its full sequence is uncharacterized protein (179 aa).

It localises to the virion. This is an uncharacterized protein from Acanthamoeba polyphaga (Amoeba).